An 899-amino-acid chain; its full sequence is Protein translocase subunit SecA (899 aa).

Residues glutamine 87, 105-109 (GEGKT), and aspartate 516 contribute to the ATP site. The Zn(2+) site is built by cysteine 884, cysteine 886, cysteine 895, and histidine 896.

The protein belongs to the SecA family. As to quaternary structure, monomer and homodimer. Part of the essential Sec protein translocation apparatus which comprises SecA, SecYEG and auxiliary proteins SecDF. Other proteins may also be involved. Requires Zn(2+) as cofactor.

It is found in the cell inner membrane. The protein localises to the cytoplasm. The catalysed reaction is ATP + H2O + cellular proteinSide 1 = ADP + phosphate + cellular proteinSide 2.. In terms of biological role, part of the Sec protein translocase complex. Interacts with the SecYEG preprotein conducting channel. Has a central role in coupling the hydrolysis of ATP to the transfer of proteins into and across the cell membrane, serving as an ATP-driven molecular motor driving the stepwise translocation of polypeptide chains across the membrane. The polypeptide is Protein translocase subunit SecA (Borreliella burgdorferi (strain ZS7) (Borrelia burgdorferi)).